Consider the following 440-residue polypeptide: Thymidine phosphorylase (440 aa).

Belongs to the thymidine/pyrimidine-nucleoside phosphorylase family. In terms of assembly, homodimer.

It catalyses the reaction thymidine + phosphate = 2-deoxy-alpha-D-ribose 1-phosphate + thymine. It functions in the pathway pyrimidine metabolism; dTMP biosynthesis via salvage pathway; dTMP from thymine: step 1/2. Its function is as follows. The enzymes which catalyze the reversible phosphorolysis of pyrimidine nucleosides are involved in the degradation of these compounds and in their utilization as carbon and energy sources, or in the rescue of pyrimidine bases for nucleotide synthesis. In Burkholderia pseudomallei (strain K96243), this protein is Thymidine phosphorylase.